The following is a 303-amino-acid chain: MNPQELKSILSSGLLSFPVTDFNAQGDFHRAGYIKRLEWLAPYGASALFAAGGTGEFFSLAASEYSEIIKTAVDTCATSVPILAGVGGPTRQAIEYAQEAERLGAKGLLLLPHYLTEASQDGVAAHVEAVCKAVKIGVVVYNRNVCRLTPTLLEQLAERCPNLIGYKDGLGDIELMVSIRRRLGDRFSYLGGLPTAEVYAAAYKALGVPVYSSAVFNFVPKLAMDFYHAIARDDHEAVGKYIDDFFLPYLEIRNRKAGYAVSIVKAGAKIAGYDAGPVRAPLTDLTPDECDMLAALMDKQGKQ.

The protein belongs to the DapA family.

It carries out the reaction 5-dehydro-4-deoxy-D-glucarate + H(+) = 2,5-dioxopentanoate + CO2 + H2O. Its pathway is carbohydrate acid metabolism; D-glucarate degradation; 2,5-dioxopentanoate from D-glucarate: step 2/2. In Pseudomonas savastanoi pv. phaseolicola (strain 1448A / Race 6) (Pseudomonas syringae pv. phaseolicola (strain 1448A / Race 6)), this protein is Probable 5-dehydro-4-deoxyglucarate dehydratase.